Consider the following 977-residue polypeptide: ATP-dependent RNA helicase DBP10 (977 aa).

The segment at 1–121 is disordered; sequence MGIISKRKRH…NSEKSKHKKG (121 aa). Over residues 26 to 35 the composition is skewed to polar residues; that stretch reads ITSNIGLNTA. Over residues 37–61 the composition is skewed to acidic residues; sequence SSDESESSGDDEEEVQDIVDFSDEE. Polar residues predominate over residues 70–81; sequence SNKTLTDNNSFP. Residues 121 to 149 carry the Q motif motif; it reads GSFPSFGFSKLILSNVHKKGFRQPTPIQR. The Helicase ATP-binding domain maps to 152–324; that stretch reads IPLILQKRDI…KAGLTNPVLV (173 aa). 165–172 is an ATP binding site; that stretch reads ARTGSGKT. Residues 272–275 carry the DEAD box motif; it reads DEAD. Disordered regions lie at residues 377-403 and 871-977; these read NKSLSDSDSEDEDNKGKQNSRKSKKGK and KTGA…KRKF. A compositionally biased stretch (basic residues) spans 394-403; sequence QNSRKSKKGK. The Helicase C-terminal domain maps to 403–554; that stretch reads KFQKLKVSAS…SMYEASCKLM (152 aa). Residues 878-894 are compositionally biased toward polar residues; the sequence is SIPTNLLSDPTTDSGSQ. Over residues 910–921 the composition is skewed to basic and acidic residues; it reads RLPDKFRDDYQS. Over residues 961–977 the composition is skewed to basic residues; the sequence is KEKKRQKNARPTKKRKF.

This sequence belongs to the DEAD box helicase family. DDX54/DBP10 subfamily.

It localises to the nucleus. Its subcellular location is the nucleolus. The catalysed reaction is ATP + H2O = ADP + phosphate + H(+). Its function is as follows. ATP-binding RNA helicase involved in the biogenesis of 60S ribosomal subunits and is required for the normal formation of 25S and 5.8S rRNAs. In Vanderwaltozyma polyspora (strain ATCC 22028 / DSM 70294 / BCRC 21397 / CBS 2163 / NBRC 10782 / NRRL Y-8283 / UCD 57-17) (Kluyveromyces polysporus), this protein is ATP-dependent RNA helicase DBP10 (DBP10).